Consider the following 808-residue polypeptide: Probable phosphoketolase 1 (808 aa).

It belongs to the XFP family. Requires thiamine diphosphate as cofactor.

The protein is Probable phosphoketolase 1 of Nostoc sp. (strain PCC 7120 / SAG 25.82 / UTEX 2576).